The following is an 823-amino-acid chain: Valine--tRNA ligase (823 aa).

Residues 52-62 (PTVSGVLHMGH) carry the 'HIGH' region motif. The 'KMSKS' region signature appears at 549 to 553 (KMSKS). Lys552 is a binding site for ATP.

Belongs to the class-I aminoacyl-tRNA synthetase family. ValS type 2 subfamily. As to quaternary structure, monomer.

It localises to the cytoplasm. It carries out the reaction tRNA(Val) + L-valine + ATP = L-valyl-tRNA(Val) + AMP + diphosphate. Catalyzes the attachment of valine to tRNA(Val). As ValRS can inadvertently accommodate and process structurally similar amino acids such as threonine, to avoid such errors, it has a 'posttransfer' editing activity that hydrolyzes mischarged Thr-tRNA(Val) in a tRNA-dependent manner. This Anaplasma marginale (strain St. Maries) protein is Valine--tRNA ligase.